Reading from the N-terminus, the 215-residue chain is 7-methyl-GTP pyrophosphatase (215 aa).

Aspartate 79 serves as the catalytic Proton acceptor.

Belongs to the Maf family. YceF subfamily. A divalent metal cation is required as a cofactor.

Its subcellular location is the cytoplasm. It catalyses the reaction N(7)-methyl-GTP + H2O = N(7)-methyl-GMP + diphosphate + H(+). Functionally, nucleoside triphosphate pyrophosphatase that hydrolyzes 7-methyl-GTP (m(7)GTP). May have a dual role in cell division arrest and in preventing the incorporation of modified nucleotides into cellular nucleic acids. This chain is 7-methyl-GTP pyrophosphatase, found in Burkholderia mallei (strain ATCC 23344).